The following is a 262-amino-acid chain: uncharacterized protein (262 aa).

2 disordered regions span residues M1–K30 and E232–E262. Acidic residues-rich tracts occupy residues N9–S21, E232–D245, and E253–E262.

This is an uncharacterized protein from Caenorhabditis elegans.